The primary structure comprises 285 residues: Secreted RxLR effector protein 106 (285 aa).

Residues 1-24 form the signal peptide; sequence MSVRYAGLLLAAVAVSAHINEVNS. A RxLR-dEER motif is present at residues 42-54; the sequence is RDLRSADNGNEER. N-linked (GlcNAc...) asparagine glycans are attached at residues Asn182 and Asn187. A compositionally biased stretch (basic and acidic residues) spans 220–229; that stretch reads IEGDKEKKGG. The tract at residues 220–262 is disordered; sequence IEGDKEKKGGPDYVEGTESRGKKRGQTEAPDLEPGLTPKQKRL. Residues 239 to 264 carry the Bipartite nuclear localization signal motif; that stretch reads RGKKRGQTEAPDLEPGLTPKQKRLKR.

It belongs to the RxLR effector family. Interacts with host RCD1 and SRO1 transcription co-regulators.

It localises to the secreted. Its subcellular location is the host nucleus. In terms of biological role, secreted effector that suppresses pathogen-associated molecular pattern (PAMP)-triggered immunity (PTI) in host plants. Binds to RCD1 and SRO1 transcription co-regulators to attenuate transcriptional activation of salicylic acid (SA)-induced defense genes and alters plant growth responses to light. Suppresses SA signal transduction but not SA levels. This is Secreted RxLR effector protein 106 from Hyaloperonospora arabidopsidis (strain Emoy2) (Downy mildew agent).